Consider the following 352-residue polypeptide: Peptide chain release factor 1 (352 aa).

Q233 carries the N5-methylglutamine modification. Residues 288-309 are disordered; sequence NAKDRKEQVGSGDRSERIRTYN. Residues 289–306 show a composition bias toward basic and acidic residues; the sequence is AKDRKEQVGSGDRSERIR.

This sequence belongs to the prokaryotic/mitochondrial release factor family. In terms of processing, methylated by PrmC. Methylation increases the termination efficiency of RF1.

It localises to the cytoplasm. Functionally, peptide chain release factor 1 directs the termination of translation in response to the peptide chain termination codons UAG and UAA. The chain is Peptide chain release factor 1 from Helicobacter acinonychis (strain Sheeba).